Here is a 160-residue protein sequence, read N- to C-terminus: Cytochrome b6-f complex subunit 4 (160 aa).

The next 3 helical transmembrane spans lie at 36 to 56 (LLYI…GLAV), 95 to 115 (LLGV…PFIE), and 131 to 151 (AVFL…TFPI).

This sequence belongs to the cytochrome b family. PetD subfamily. As to quaternary structure, the 4 large subunits of the cytochrome b6-f complex are cytochrome b6, subunit IV (17 kDa polypeptide, petD), cytochrome f and the Rieske protein, while the 4 small subunits are petG, petL, petM and petN. The complex functions as a dimer.

The protein localises to the plastid. It is found in the cyanelle thylakoid membrane. Functionally, component of the cytochrome b6-f complex, which mediates electron transfer between photosystem II (PSII) and photosystem I (PSI), cyclic electron flow around PSI, and state transitions. This is Cytochrome b6-f complex subunit 4 from Cyanophora paradoxa.